Here is a 119-residue protein sequence, read N- to C-terminus: UPF0145 protein Ta0182 (119 aa).

It belongs to the UPF0145 family.

In Thermoplasma acidophilum (strain ATCC 25905 / DSM 1728 / JCM 9062 / NBRC 15155 / AMRC-C165), this protein is UPF0145 protein Ta0182.